The following is a 323-amino-acid chain: Cytochrome c biogenesis protein CcsA (323 aa).

8 helical membrane passes run valine 17–phenylalanine 37, glycine 44–glycine 64, phenylalanine 68–valine 88, leucine 98–leucine 118, methionine 143–isoleucine 163, isoleucine 229–asparagine 249, glutamate 262–arginine 279, and isoleucine 291–glycine 311.

This sequence belongs to the CcmF/CycK/Ccl1/NrfE/CcsA family. In terms of assembly, may interact with Ccs1.

It localises to the plastid. It is found in the chloroplast thylakoid membrane. In terms of biological role, required during biogenesis of c-type cytochromes (cytochrome c6 and cytochrome f) at the step of heme attachment. This chain is Cytochrome c biogenesis protein CcsA, found in Lotus japonicus (Lotus corniculatus var. japonicus).